The chain runs to 384 residues: 1-deoxy-D-xylulose 5-phosphate reductoisomerase (384 aa).

Positions 10, 11, 12, 13, 36, and 122 each coordinate NADPH. Lys-123 provides a ligand contact to 1-deoxy-D-xylulose 5-phosphate. Glu-124 is a binding site for NADPH. Asp-148 contributes to the Mn(2+) binding site. Residues Ser-149, Glu-150, Ser-174, and His-197 each contribute to the 1-deoxy-D-xylulose 5-phosphate site. Glu-150 contributes to the Mn(2+) binding site. Gly-203 is an NADPH binding site. Positions 210, 215, 216, and 219 each coordinate 1-deoxy-D-xylulose 5-phosphate. A Mn(2+)-binding site is contributed by Glu-219.

Belongs to the DXR family. Mg(2+) is required as a cofactor. Requires Mn(2+) as cofactor.

It carries out the reaction 2-C-methyl-D-erythritol 4-phosphate + NADP(+) = 1-deoxy-D-xylulose 5-phosphate + NADPH + H(+). It participates in isoprenoid biosynthesis; isopentenyl diphosphate biosynthesis via DXP pathway; isopentenyl diphosphate from 1-deoxy-D-xylulose 5-phosphate: step 1/6. In terms of biological role, catalyzes the NADPH-dependent rearrangement and reduction of 1-deoxy-D-xylulose-5-phosphate (DXP) to 2-C-methyl-D-erythritol 4-phosphate (MEP). The protein is 1-deoxy-D-xylulose 5-phosphate reductoisomerase of Chlorobium phaeobacteroides (strain DSM 266 / SMG 266 / 2430).